A 212-amino-acid polypeptide reads, in one-letter code: Large ribosomal subunit protein uL1 (212 aa).

It belongs to the universal ribosomal protein uL1 family. As to quaternary structure, part of the 50S ribosomal subunit.

In terms of biological role, binds directly to 23S rRNA. Probably involved in E site tRNA release. Functionally, protein L1 is also a translational repressor protein, it controls the translation of its operon by binding to its mRNA. The chain is Large ribosomal subunit protein uL1 from Methanothrix thermoacetophila (strain DSM 6194 / JCM 14653 / NBRC 101360 / PT) (Methanosaeta thermophila).